Here is a 199-residue protein sequence, read N- to C-terminus: uncharacterized protein (199 aa).

Residues 7–27 (FWFWLILGIIALFIIVKAIVI) traverse the membrane as a helical segment.

This sequence belongs to the band 7/mec-2 family.

It is found in the membrane. This is an uncharacterized protein from Methanocaldococcus jannaschii (strain ATCC 43067 / DSM 2661 / JAL-1 / JCM 10045 / NBRC 100440) (Methanococcus jannaschii).